We begin with the raw amino-acid sequence, 1034 residues long: Vacuolar membrane protease (1034 aa).

The Cytoplasmic portion of the chain corresponds to 1–11 (MAVKNPFGFTT). A helical membrane pass occupies residues 12–32 (GPVTFWLIVVYAAFLIPLVWI). Topologically, residues 33-418 (HESVPAVPSS…GFAILELRGL (386 aa)) are vacuolar. Residues Asn-51 and Asn-141 are each glycosylated (N-linked (GlcNAc...) asparagine). The Zn(2+) site is built by His-200 and Asp-212. The active-site Proton acceptor is the Glu-246. Zn(2+) contacts are provided by Glu-247, Glu-272, and His-345. A helical transmembrane segment spans residues 419 to 439 (FAWTLTLLIVSPLVLALVTYI). Over 440–470 (LSRKDKYYFFSRKVTADEDDEPVSVGGWKGF) the chain is Cytoplasmic. Residues 471–491 (FRFPFALVLSASITVLSAFLI) form a helical membrane-spanning segment. Residues 492 to 497 (RRVNPH) lie on the Vacuolar side of the membrane. The helical transmembrane segment at 498 to 518 (IIYSSPYAVWAMTLSLFFLVF) threads the bilayer. Topologically, residues 519-536 (WTIAKGASVVRPSALQRG) are cytoplasmic. A helical transmembrane segment spans residues 537-557 (YAHIWLFVISWVILVAVTAAA). The Vacuolar segment spans residues 558 to 567 (DRFKIASGYP). Residues 568–588 (FAFFHSAVFVSALISLCDLFA) traverse the membrane as a helical segment. Topologically, residues 589 to 703 (LPSKQEFARN…NLPSWTWFFQ (115 aa)) are cytoplasmic. The segment at 623–653 (HSHVEDDVAEEPTETTPLRSGENGNGNNGTI) is disordered. Residues 704–724 (LLLLAPITITVFLQIALFIVS) form a helical membrane-spanning segment. Residues 725–736 (AIHSAAADGNDP) lie on the Vacuolar side of the membrane. Residues 737–757 (ILVYAAIAAFSIIILLPATPF) form a helical membrane-spanning segment. Over 758 to 762 (IHRAS) the chain is Cytoplasmic. A helical transmembrane segment spans residues 763 to 783 (FYLPLFLLLVFFVTLIYNLVA). At 784 to 1034 (FPFSAENRLK…LVEGRKKFRA (251 aa)) the chain is on the vacuolar side. Residues Asn-805, Asn-866, and Asn-879 are each glycosylated (N-linked (GlcNAc...) asparagine).

The protein belongs to the peptidase M28 family. Requires Zn(2+) as cofactor.

The protein localises to the vacuole membrane. May be involved in vacuolar sorting and osmoregulation. The protein is Vacuolar membrane protease of Colletotrichum graminicola (strain M1.001 / M2 / FGSC 10212) (Maize anthracnose fungus).